A 251-amino-acid chain; its full sequence is Probable phosphatase Sputw3181_2734 (251 aa).

Zn(2+) is bound by residues His8, His10, His16, His41, Glu74, His102, His132, Asp193, and His195.

It belongs to the PHP family. It depends on Zn(2+) as a cofactor.

The sequence is that of Probable phosphatase Sputw3181_2734 from Shewanella sp. (strain W3-18-1).